Consider the following 158-residue polypeptide: Cytochrome b6-f complex subunit 4 (158 aa).

The next 3 membrane-spanning stretches (helical) occupy residues 34–54 (LLYISPVVILGTIACNVGLAV), 93–113 (LLGVLLMVSVPTGLLTVPFLE), and 129–149 (TVFLIGTVIALWLGIGATLPI).

This sequence belongs to the cytochrome b family. PetD subfamily. As to quaternary structure, the 4 large subunits of the cytochrome b6-f complex are cytochrome b6, subunit IV (17 kDa polypeptide, petD), cytochrome f and the Rieske protein, while the 4 small subunits are petG, petL, petM and petN. The complex functions as a dimer.

The protein resides in the plastid. Its subcellular location is the chloroplast thylakoid membrane. Component of the cytochrome b6-f complex, which mediates electron transfer between photosystem II (PSII) and photosystem I (PSI), cyclic electron flow around PSI, and state transitions. The sequence is that of Cytochrome b6-f complex subunit 4 from Liriodendron tulipifera (Tuliptree).